The sequence spans 563 residues: Cytochrome P450 monooxygenase phqL (563 aa).

3 helical membrane passes run 20 to 40 (ENFS…IIIF), 52 to 72 (IPVG…FVPG), and 80 to 100 (ALWL…VSIL). N-linked (GlcNAc...) asparagine glycosylation is present at Asn279. A helical membrane pass occupies residues 362–382 (LVIFAGSGTVAVTIIGCLYFL). Asn419 carries an N-linked (GlcNAc...) asparagine glycan. Cys502 provides a ligand contact to heme.

The protein belongs to the cytochrome P450 family. Heme is required as a cofactor.

It is found in the membrane. The protein operates within alkaloid biosynthesis. Functionally, cytochrome P450 monooxygenase; part of the gene cluster that mediates the biosynthesis of paraherquamide, a fungal indole alkaloid that belongs to a family of natural products containing a characteristic bicyclo[2.2.2]diazaoctane core. The first steps in the biosynthesis of paraherquamide is the production of the beta-methyl-proline precursor from L-isoleucine. They require oxidation of a terminally hydroxylated L-isoleucine to the corresponding aldehyde by enzymes which have still to be identified. Spontaneous cyclization and dehydration would yield the 4-methyl pyrolline-5-carboxylic acid, which is then reduced by the pyrroline-5-carboxylate reductase phqD leading to the beta-methyl-proline precursor. The next step of paraherquamide biosynthesis involves coupling of beta-methyl-proline and L-tryptophan by the bimodular NRPS phqB, to produce a monooxopiperazine intermediate. The reductase (R) domain of phqB utilizes NADPH for hydride transfer to reduce the thioester bond of the T domain-tethered linear dipeptide to a hemithioaminal intermediate, which spontaneously cleaves the C-S bond to release the aldehyde product. This compound undergoes spontaneous cyclization and dehydration to give a dienamine which is reverse prenylated at C-2 by the reverse prenyltransferase phqJ. The other prenyltransferase present in the cluster, phqI may be a redundant gene in the pathway. During biosynthetic assembly, the key step to produce the polycyclic core is catalyzed by the bifunctional reductase and intramolecular [4+2] Diels-Alderase, phqE, resulting in formation of the [2.2.2] diazaoctane intermediate preparaherquamide. Following formation of preparaherquamide, an indole 2,3-epoxidation-initiated pinacol-like rearrangement is catalyzed by the phqK FAD-dependent monooxygenase. The prenyltransferase phqA, the cytochrome P450 monooxygenase phqL, and the FAD-linked oxidoreductase phqH (or the cytochrome P450 monooxygenase phqM), are proposed to be involved in the formation of the pyran ring. The FAD-dependent monooxygenase phqK is likely responsible for generation of the spiro-oxindole, and the N-methylation is likely mediated by the phqN methyltransferase leading to the isolable natural product paraherquamide F. However, the order of these biosynthetic steps has still to be determined. In late-stage paraherquamide biosynthesis, the third P450 monooxygenase, phqO, is probably responsible for the C-14 hydroxylation, transforming paraherquamide F to paraherquamide G, and paraherquamide E to the final product paraherquamide A. The expansion from the 6-membered ring pyran (in paraherquamides F and G) to the 7-membered dioxepin ring (in paraherquamides A and E) represents a poorly understood but intriguing process that probably involves the 2-oxoglutarate-dependent dioxygenase phqC. Finally, the remaining members of the paraherquamide cluster, including phqI as well as phqM (or phqH), do not have a clearly prescribed role and appear to be redundant. The protein is Cytochrome P450 monooxygenase phqL of Penicillium fellutanum.